The following is a 382-amino-acid chain: Probable G-protein coupled receptor 132 (382 aa).

Residues 1-42 are Extracellular-facing; it reads MRSEPTNAAGNTTLGVTSVLQSTSVPSSETCHVSYEESRVVL. Asn11 is a glycosylation site (N-linked (GlcNAc...) asparagine). A helical membrane pass occupies residues 43–65; it reads VVVYSAVCLLGLPANCLTAWLTL. The Cytoplasmic segment spans residues 66–76; sequence LQVLQRNVLAV. Residues 77–99 form a helical membrane-spanning segment; it reads YLFCLSLCELLYISTVPLWIIYI. Topologically, residues 100–113 are extracellular; it reads QNQHKWNLGPQACK. A disulfide bond links Cys112 and Cys184. Residues 114–135 form a helical membrane-spanning segment; that stretch reads VTAYIFFCNIYISILLLCCISC. The Cytoplasmic segment spans residues 136 to 155; it reads DRYMAVVYALESRGHRHQRT. The helical transmembrane segment at 156-175 threads the bilayer; the sequence is AVTISACVILLVGLVNYPVF. At 176–198 the chain is on the extracellular side; that stretch reads DMKVEKSFCFEPLRMNSKIAGYH. The helical transmembrane segment at 199–221 threads the bilayer; sequence YLRFTFGFAIPLGILAFTNHQIF. Residues 222-241 lie on the Cytoplasmic side of the membrane; that stretch reads RSIKLSDSLSAAQKNKVKRS. A helical transmembrane segment spans residues 242–261; sequence AIAVVTIFLVCFAPYHVVLL. Residues 262-286 are Extracellular-facing; it reads VKAASFSFYQGDMDAVCAFESRLYT. The helical transmembrane segment at 287–309 threads the bilayer; the sequence is VSMVFLCLSTVNSVADPIIYVLG. Topologically, residues 310–382 are cytoplasmic; the sequence is TDHSRQEVSR…SPERLPEELC (73 aa).

The protein belongs to the G-protein coupled receptor 1 family. As to expression, highly expressed in hematopoietic tissues rich in lymphocytes like spleen and thymus. Weakly expressed in heart and lung. Highly expressed in infiltrating macrophages within atherosclerotic lesions.

Its subcellular location is the cell membrane. Functionally, may be a receptor for oxidized free fatty acids derived from linoleic and arachidonic acids such as 9-hydroxyoctadecadienoic acid (9-HODE). Activates a G alpha protein, most likely G alpha(q). May be involved in apoptosis. Functions at the G2/M checkpoint to delay mitosis. May function as a sensor that monitors the oxidative states and mediates appropriate cellular responses such as secretion of paracrine signals and attenuation of proliferation. May mediate ths accumulation of intracellular inositol phosphates at acidic pH through proton-sensing activity. The sequence is that of Probable G-protein coupled receptor 132 (Gpr132) from Mus musculus (Mouse).